A 60-amino-acid polypeptide reads, in one-letter code: Transcriptional regulatory protein SenN (60 aa).

The segment at residues 11–31 is a DNA-binding region (H-T-H motif); the sequence is RFRKRKTFGNQILPLELLIEK.

The protein to B.subtilis SenS.

Its function is as follows. Regulates the expression of extracellular-protein genes of Bacillus natto. In Bacillus subtilis subsp. natto, this protein is Transcriptional regulatory protein SenN (senN).